The sequence spans 764 residues: E3 ubiquitin-protein ligase CBL-B-B (764 aa).

A compositionally biased stretch (low complexity) spans Met-1–Ser-19. Positions Met-1–Ser-27 are disordered. Positions Pro-48–Gln-180 are 4H. In terms of domain architecture, Cbl-PTB spans Pro-48 to Asp-356. The interval Gly-181 to Phe-253 is EF-hand-like. 5 residues coordinate Ca(2+): Asp-234, Thr-236, Asn-238, Tyr-240, and Glu-245. The SH2-like stretch occupies residues Gln-254–Asp-356. 4-O-phospho-L-tyrosine is bound at residue Arg-299. Residues Leu-357–Leu-385 are linker. An RING-type zinc finger spans residues Cys-386–Arg-425. Disordered regions lie at residues Met-482–Cys-583 and Lys-707–Pro-726. Residues Arg-485–Leu-498 show a composition bias toward polar residues. Residues Leu-556–Pro-578 are compositionally biased toward pro residues.

In terms of assembly, interacts with several SH3 domain-containing proteins and with poly-ubiquitinated proteins.

It localises to the cytoplasm. The catalysed reaction is S-ubiquitinyl-[E2 ubiquitin-conjugating enzyme]-L-cysteine + [acceptor protein]-L-lysine = [E2 ubiquitin-conjugating enzyme]-L-cysteine + N(6)-ubiquitinyl-[acceptor protein]-L-lysine.. The protein operates within protein modification; protein ubiquitination. E3 ubiquitin-protein ligase which accepts ubiquitin from specific E2 ubiquitin-conjugating enzymes, and transfers it to substrates, generally promoting their degradation by the proteasome. This is E3 ubiquitin-protein ligase CBL-B-B (cblb-b) from Xenopus laevis (African clawed frog).